Consider the following 1332-residue polypeptide: Sister chromatid cohesion protein PDS5 homolog A (1332 aa).

M1 bears the N-acetylmethionine mark. Residues 392-428 (ALVNDQLLGFVRERTLDKRWRVRKEAMMGLAQLYKKY) form an HEAT repeat. S1096 bears the Phosphoserine mark. Residues 1138-1332 (GVLGTVNKPL…PAERQIDLQR (195 aa)) form a disordered region. N6-acetyllysine is present on K1145. The segment covering 1160–1173 (GTETGSNINANSEL) has biased composition (polar residues). S1174 and S1194 each carry phosphoserine. T1207 bears the Phosphothreonine mark. K1210 is subject to N6-acetyllysine. Over residues 1222-1232 (SDQSTQGNISS) the composition is skewed to polar residues. An N6-acetyllysine modification is found at K1288. S1303 carries the post-translational modification Phosphoserine. A compositionally biased stretch (basic and acidic residues) spans 1316–1332 (DGAKKAVPAERQIDLQR).

It belongs to the PDS5 family. In terms of assembly, interacts with the cohesin complex. Interacts with WAPL (via FGF motifs) or CDCA5 (via the FGF motif); the interaction is direct, cohesin-dependent and competitive. Interacts with SMC3. Interacts with TP63.

It localises to the nucleus. Probable regulator of sister chromatid cohesion in mitosis which may stabilize cohesin complex association with chromatin. May couple sister chromatid cohesion during mitosis to DNA replication. Cohesion ensures that chromosome partitioning is accurate in both meiotic and mitotic cells and plays an important role in DNA repair. The polypeptide is Sister chromatid cohesion protein PDS5 homolog A (Pds5a) (Mus musculus (Mouse)).